The sequence spans 320 residues: MARNKIALIGSGMIGGTLAHLAGLKELGDVVLFDIAEGTPQGKGLDIAESSPVDGFDAKFTGANDYAAIEGADVVIVTAGVPRKPGMSRDDLLGINLKVMEQVGAGIKKYAPEAFVICITNPLDAMVWALQKFSGLPAHKVVGMAGVLDSARFRYFLSEEFNVSVEDVTAFVLGGHGDSMVPLARYSTVAGIPLPDLVKMGWTSRDKLDKIIQRTRDGGAEIVGLLKTGSAFYAPAASAIQVAESYLKDKKRVLPVAAQLSGQYGVKDMYVGVPTVIGANGVERIIEIDLDKDEKAQFDKSVASVAGLCEACIGIAPSLK.

NAD(+) is bound by residues 10 to 15 (GSGMIG) and Asp34. Residues Arg83 and Arg89 each contribute to the substrate site. NAD(+)-binding positions include Asn96 and 119–121 (ITN). Positions 121 and 152 each coordinate substrate. His176 (proton acceptor) is an active-site residue.

The protein belongs to the LDH/MDH superfamily. MDH type 3 family.

It carries out the reaction (S)-malate + NAD(+) = oxaloacetate + NADH + H(+). In terms of biological role, catalyzes the reversible oxidation of malate to oxaloacetate. This is Malate dehydrogenase from Brucella canis (strain ATCC 23365 / NCTC 10854 / RM-666).